The sequence spans 295 residues: Malonyl-[acyl-carrier protein] O-methyltransferase (295 aa).

It belongs to the methyltransferase superfamily.

It catalyses the reaction malonyl-[ACP] + S-adenosyl-L-methionine = malonyl-[ACP] methyl ester + S-adenosyl-L-homocysteine. It participates in cofactor biosynthesis; biotin biosynthesis. Its function is as follows. Converts the free carboxyl group of a malonyl-thioester to its methyl ester by transfer of a methyl group from S-adenosyl-L-methionine (SAM). It allows to synthesize pimeloyl-ACP via the fatty acid synthetic pathway. The chain is Malonyl-[acyl-carrier protein] O-methyltransferase from Halorhodospira halophila (strain DSM 244 / SL1) (Ectothiorhodospira halophila (strain DSM 244 / SL1)).